The primary structure comprises 192 residues: Orotate phosphoribosyltransferase (192 aa).

Residue 116-124 (EDIVTTGLS) coordinates 5-phospho-alpha-D-ribose 1-diphosphate. Positions 120 and 148 each coordinate orotate.

Belongs to the purine/pyrimidine phosphoribosyltransferase family. PyrE subfamily. As to quaternary structure, homodimer. Mg(2+) is required as a cofactor.

The enzyme catalyses orotidine 5'-phosphate + diphosphate = orotate + 5-phospho-alpha-D-ribose 1-diphosphate. It participates in pyrimidine metabolism; UMP biosynthesis via de novo pathway; UMP from orotate: step 1/2. Its function is as follows. Catalyzes the transfer of a ribosyl phosphate group from 5-phosphoribose 1-diphosphate to orotate, leading to the formation of orotidine monophosphate (OMP). In Bartonella tribocorum (strain CIP 105476 / IBS 506), this protein is Orotate phosphoribosyltransferase.